Here is a 151-residue protein sequence, read N- to C-terminus: Ribosome maturation factor RimP (151 aa).

The protein belongs to the RimP family.

The protein resides in the cytoplasm. In terms of biological role, required for maturation of 30S ribosomal subunits. This chain is Ribosome maturation factor RimP, found in Aliivibrio salmonicida (strain LFI1238) (Vibrio salmonicida (strain LFI1238)).